A 258-amino-acid chain; its full sequence is Glucosamine-6-phosphate deaminase (258 aa).

The active-site Proton acceptor; for enolization step is Asp65. Catalysis depends on Asp134, which acts as the For ring-opening step. The Proton acceptor; for ring-opening step role is filled by His136. The active-site For ring-opening step is Glu141.

Belongs to the glucosamine/galactosamine-6-phosphate isomerase family. NagB subfamily.

The catalysed reaction is alpha-D-glucosamine 6-phosphate + H2O = beta-D-fructose 6-phosphate + NH4(+). The protein operates within amino-sugar metabolism; N-acetylneuraminate degradation; D-fructose 6-phosphate from N-acetylneuraminate: step 5/5. Catalyzes the reversible isomerization-deamination of glucosamine 6-phosphate (GlcN6P) to form fructose 6-phosphate (Fru6P) and ammonium ion. This Corynebacterium kroppenstedtii (strain DSM 44385 / JCM 11950 / CIP 105744 / CCUG 35717) protein is Glucosamine-6-phosphate deaminase.